Consider the following 478-residue polypeptide: Kynureninase (478 aa).

Pyridoxal 5'-phosphate contacts are provided by residues leucine 150, threonine 151, 178-181, serine 234, aspartate 263, histidine 266, and tyrosine 288; that span reads FPSD. An N6-(pyridoxal phosphate)lysine modification is found at lysine 289. 2 residues coordinate pyridoxal 5'-phosphate: tryptophan 318 and asparagine 346.

Belongs to the kynureninase family. In terms of assembly, homodimer. It depends on pyridoxal 5'-phosphate as a cofactor.

It is found in the cytoplasm. The enzyme catalyses L-kynurenine + H2O = anthranilate + L-alanine + H(+). It carries out the reaction 3-hydroxy-L-kynurenine + H2O = 3-hydroxyanthranilate + L-alanine + H(+). Its pathway is amino-acid degradation; L-kynurenine degradation; L-alanine and anthranilate from L-kynurenine: step 1/1. The protein operates within cofactor biosynthesis; NAD(+) biosynthesis; quinolinate from L-kynurenine: step 2/3. Catalyzes the cleavage of L-kynurenine (L-Kyn) and L-3-hydroxykynurenine (L-3OHKyn) into anthranilic acid (AA) and 3-hydroxyanthranilic acid (3-OHAA), respectively. The polypeptide is Kynureninase (Caenorhabditis elegans).